Here is a 439-residue protein sequence, read N- to C-terminus: Ectonucleotide pyrophosphatase/phosphodiesterase family member 7 (439 aa).

Positions 1–21 (MGHSAVLLCVALAILPACVTG) are cleaved as a signal peptide. Over 22-414 (APVQRQHKLL…ILRPMLRSGS (393 aa)) the chain is Extracellular. Zn(2+) is bound by residues Asp36 and Thr72. Residues 69-75 (VTMTSPC) form a required for enzyme activity region. Thr72 functions as the Nucleophile in the catalytic mechanism. Asn93 contributes to the substrate binding site. 4 N-linked (GlcNAc...) asparagine glycosylation sites follow: Asn97, Asn118, Asn143, and Asn165. The Zn(2+) site is built by Asp196, His200, Asp243, and His244. Residue Asn264 is glycosylated (N-linked (GlcNAc...) asparagine). His350 serves as a coordination point for Zn(2+). The helical transmembrane segment at 415–435 (ASLLSSQHHLVALLVGILTCL) threads the bilayer. The Cytoplasmic portion of the chain corresponds to 436-439 (AKVL).

Zn(2+) serves as cofactor. Post-translationally, N-glycosylated; required for activity and transport to the plasma membrane. As to expression, expressed in liver and small intestine.

It is found in the cell membrane. It carries out the reaction a sphingomyelin + H2O = phosphocholine + an N-acylsphing-4-enine + H(+). The catalysed reaction is a 1-O-alkyl-2-acetyl-sn-glycero-3-phosphocholine + H2O = a 1-O-alkyl-2-acetyl-sn-glycerol + phosphocholine + H(+). The enzyme catalyses 1-O-octadecyl-2-acetyl-sn-glycero-3-phosphocholine + H2O = 1-O-octadecyl-2-acetyl-sn-glycerol + phosphocholine + H(+). It catalyses the reaction 1-hexadecanoyl-sn-glycero-3-phosphocholine + H2O = 1-hexadecanoyl-sn-glycerol + phosphocholine + H(+). Choline-specific phosphodiesterase that hydrolyzes sphingomyelin releasing the ceramide and phosphocholine and therefore is involved in sphingomyelin digestion, ceramide formation, and fatty acid (FA) absorption in the gastrointestinal tract. Also has phospholipase C activity and can also cleave phosphocholine from palmitoyl lyso-phosphatidylcholine and platelet-activating factor (PAF) leading to its inactivation. Does not have nucleotide pyrophosphatase activity. May promote cholesterol absorption by affecting the levels of sphingomyelin derived from either diet or endogenous sources, in the intestinal lumen. The protein is Ectonucleotide pyrophosphatase/phosphodiesterase family member 7 of Mus musculus (Mouse).